Consider the following 943-residue polypeptide: Isoleucine--tRNA ligase (943 aa).

The 'HIGH' region signature appears at 58–68 (PYANGTIHIGH). Residue Glu567 participates in L-isoleucyl-5'-AMP binding. The 'KMSKS' region signature appears at 608–612 (KMSKS). Lys611 is an ATP binding site. Zn(2+) is bound by residues Cys906, Cys909, Cys926, and Cys929.

Belongs to the class-I aminoacyl-tRNA synthetase family. IleS type 1 subfamily. Monomer. It depends on Zn(2+) as a cofactor.

Its subcellular location is the cytoplasm. The enzyme catalyses tRNA(Ile) + L-isoleucine + ATP = L-isoleucyl-tRNA(Ile) + AMP + diphosphate. Its function is as follows. Catalyzes the attachment of isoleucine to tRNA(Ile). As IleRS can inadvertently accommodate and process structurally similar amino acids such as valine, to avoid such errors it has two additional distinct tRNA(Ile)-dependent editing activities. One activity is designated as 'pretransfer' editing and involves the hydrolysis of activated Val-AMP. The other activity is designated 'posttransfer' editing and involves deacylation of mischarged Val-tRNA(Ile). This Pseudomonas fluorescens (strain Pf0-1) protein is Isoleucine--tRNA ligase.